Reading from the N-terminus, the 442-residue chain is Protein translocase subunit SecF (442 aa).

A disordered region spans residues 1-39 (MASKAKTGRDDEATSAVELTEATESAVARTDGDSTTDTA). Helical transmembrane passes span 67–87 (WFGV…FRGF), 187–207 (ITKK…LYIT), 218–238 (AITA…LVGF), 243–263 (ATVI…VIVF), 301–321 (LIGV…LGVG), and 331–351 (LIGI…LLVT). Positions 366–442 (VLKRRNSGSP…PTGKRNAGRR (77 aa)) are disordered. A compositionally biased stretch (low complexity) spans 402-432 (QASSQSAPRAAQGSSKPAPGARPVRPVGTRR). Basic residues predominate over residues 433-442 (PTGKRNAGRR).

It belongs to the SecD/SecF family. SecF subfamily. In terms of assembly, forms a complex with SecD. Part of the essential Sec protein translocation apparatus which comprises SecA, SecYEG and auxiliary proteins SecDF. Other proteins may also be involved.

The protein localises to the cell membrane. In terms of biological role, part of the Sec protein translocase complex. Interacts with the SecYEG preprotein conducting channel. SecDF uses the proton motive force (PMF) to complete protein translocation after the ATP-dependent function of SecA. The polypeptide is Protein translocase subunit SecF (Mycobacterium tuberculosis (strain CDC 1551 / Oshkosh)).